Consider the following 282-residue polypeptide: DegV domain-containing protein spr1415 (282 aa).

Residues 3 to 280 (LAVFTDSSAY…AGSIALGYIP (278 aa)) form the DegV domain. The hexadecanoate site is built by T61 and S94.

May bind long-chain fatty acids, such as palmitate, and may play a role in lipid transport or fatty acid metabolism. This Streptococcus pneumoniae (strain ATCC BAA-255 / R6) protein is DegV domain-containing protein spr1415.